A 691-amino-acid polypeptide reads, in one-letter code: Dipeptidyl peptidase 3 (691 aa).

Position 431 (histidine 431) interacts with Zn(2+). Glutamate 432 is an active-site residue. Zn(2+) contacts are provided by histidine 436 and glutamate 492.

The protein belongs to the peptidase M49 family. Requires Zn(2+) as cofactor.

The protein localises to the cytoplasm. It catalyses the reaction Release of an N-terminal dipeptide from a peptide comprising four or more residues, with broad specificity. Also acts on dipeptidyl 2-naphthylamides.. This Dictyostelium discoideum (Social amoeba) protein is Dipeptidyl peptidase 3 (dpp3-1).